The following is a 414-amino-acid chain: MDRLNNLATQLEQNPAKGLDAITSKNPDDVVITAAYRTAHTKGGKGLFKDTSSSELLASLLEGLVKESKIDPKLIGDVVCGNVLAAGAGATEHRAACLVAGIPETVPFVALNRQCSSGLMAVNDVANKIRAGQIDIGIGCGVESMSNQYGPNSVTPFSNKFQNNEEAKKCLIPMGITSENVAAKYNVSRKAQDAFAAKSYEKAAAAQAAGKFDQEILPIKTTVLDDDDNEKEVTVNKDDGIRPGVTAEKLGKLKPAFSAEGTTHAGNASQISDGAGAVLLMRRSVAEKLGQPILAKFVHCKTVGVPPELMGIGPAYAIPAVLEDLGLTVNDVDVFEINEAFASQALFSIQHCGIDESKVNPRGGAIAIGHPLGATGARQFATLLSELKESGKKVGVTSMCIGTGMGAASLVVAE.

The transit peptide at 1–9 (MDRLNNLAT) directs the protein to the peroxisome. A PTS2-type peroxisomal targeting signal region spans residues 1–9 (MDRLNNLAT). The Acyl-thioester intermediate role is filled by Cys115. Residues His370 and Cys400 each act as proton acceptor in the active site.

It belongs to the thiolase-like superfamily. Thiolase family. In terms of assembly, homodimer. Interacts (via PTS2-type peroxisomal targeting signal region) with PEX7; leading to its translocation into peroxisomes.

The protein resides in the peroxisome. The catalysed reaction is an acyl-CoA + acetyl-CoA = a 3-oxoacyl-CoA + CoA. The protein operates within lipid metabolism; fatty acid metabolism. Functionally, responsible for the thiolytic cleavage of straight chain 3-keto fatty acyl-CoAs (3-oxoacyl-CoAs). The polypeptide is 3-ketoacyl-CoA thiolase, peroxisomal (POT1) (Yarrowia lipolytica (strain CLIB 122 / E 150) (Yeast)).